Reading from the N-terminus, the 209-residue chain is Cytidylate kinase (209 aa).

Position 7-15 (7-15) interacts with ATP; the sequence is GVAASGKSS.

It belongs to the cytidylate kinase family. Type 1 subfamily.

It localises to the cytoplasm. It carries out the reaction CMP + ATP = CDP + ADP. It catalyses the reaction dCMP + ATP = dCDP + ADP. The sequence is that of Cytidylate kinase from Deinococcus geothermalis (strain DSM 11300 / CIP 105573 / AG-3a).